Consider the following 271-residue polypeptide: Cobalt import ATP-binding protein CbiO (271 aa).

An ABC transporter domain is found at 2 to 236 (LATSDLWFRY…TEAMEHAGLT (235 aa)). An ATP-binding site is contributed by 34 to 41 (GANGCGKS).

The protein belongs to the ABC transporter superfamily. Cobalt importer (TC 3.A.1.18.1) family. In terms of assembly, forms an energy-coupling factor (ECF) transporter complex composed of an ATP-binding protein (A component, CbiO), a transmembrane protein (T component, CbiQ) and 2 possible substrate-capture proteins (S components, CbiM and CbiN) of unknown stoichimetry.

It localises to the cell inner membrane. Its pathway is cofactor biosynthesis; adenosylcobalamin biosynthesis. Its function is as follows. Part of the energy-coupling factor (ECF) transporter complex CbiMNOQ involved in cobalt import. Presumably responsible for energy coupling to the transport system. The protein is Cobalt import ATP-binding protein CbiO of Salmonella typhi.